The primary structure comprises 942 residues: Chitin synthase 4 (942 aa).

Residues 1 to 124 form a disordered region; the sequence is MPPRYPFGGG…FDEHDGDVPL (124 aa). Residues 14–26 show a composition bias toward basic and acidic residues; sequence DEAHHQPLERRTT. A compositionally biased stretch (polar residues) spans 27–36; sequence AEAQGNSFTH. N-linked (GlcNAc...) asparagine glycosylation occurs at N604. The next 7 helical transmembrane spans lie at 641-661, 674-694, 709-729, 755-775, 783-803, 885-905, and 909-929; these read TIQL…FFIL, VPNL…FLLS, AMVV…YLAV, IVIS…MFLE, IVQY…YAFA, VLCW…ISSI, and TIYM…RMMG.

It belongs to the chitin synthase family. Class I subfamily.

It is found in the cell membrane. It localises to the cytoplasmic vesicle membrane. The catalysed reaction is [(1-&gt;4)-N-acetyl-beta-D-glucosaminyl](n) + UDP-N-acetyl-alpha-D-glucosamine = [(1-&gt;4)-N-acetyl-beta-D-glucosaminyl](n+1) + UDP + H(+). Polymerizes chitin, a structural polymer of the cell wall and septum, by transferring the sugar moiety of UDP-GlcNAc to the non-reducing end of the growing chitin polymer. This Mycosarcoma maydis (Corn smut fungus) protein is Chitin synthase 4.